A 438-amino-acid polypeptide reads, in one-letter code: 23S rRNA (uracil(1939)-C(5))-methyltransferase RlmD (438 aa).

Residues 4-68 (FYTPGRRTAT…RHFARGRVTR (65 aa)) form the TRAM domain. Residues Cys81, Cys87, Cys90, and Cys167 each coordinate [4Fe-4S] cluster. S-adenosyl-L-methionine contacts are provided by Gln269, Phe298, Asn303, Glu319, Asn346, and Asp367. Cys393 functions as the Nucleophile in the catalytic mechanism.

Belongs to the class I-like SAM-binding methyltransferase superfamily. RNA M5U methyltransferase family. RlmD subfamily.

It carries out the reaction uridine(1939) in 23S rRNA + S-adenosyl-L-methionine = 5-methyluridine(1939) in 23S rRNA + S-adenosyl-L-homocysteine + H(+). Functionally, catalyzes the formation of 5-methyl-uridine at position 1939 (m5U1939) in 23S rRNA. This chain is 23S rRNA (uracil(1939)-C(5))-methyltransferase RlmD, found in Edwardsiella ictaluri (strain 93-146).